The chain runs to 227 residues: ATP-dependent dethiobiotin synthetase BioD (227 aa).

Position 13–18 (13–18) interacts with ATP; it reads DIGKTY. Residue Thr17 coordinates Mg(2+). The active site involves Lys38. Ser42 serves as a coordination point for substrate. ATP is bound by residues Asp55, 116–119, and 179–180; these read EGSG and NN. Asp55 and Glu116 together coordinate Mg(2+).

This sequence belongs to the dethiobiotin synthetase family. In terms of assembly, homodimer. Requires Mg(2+) as cofactor.

The protein localises to the cytoplasm. The catalysed reaction is (7R,8S)-7,8-diammoniononanoate + CO2 + ATP = (4R,5S)-dethiobiotin + ADP + phosphate + 3 H(+). The protein operates within cofactor biosynthesis; biotin biosynthesis; biotin from 7,8-diaminononanoate: step 1/2. Its function is as follows. Catalyzes a mechanistically unusual reaction, the ATP-dependent insertion of CO2 between the N7 and N8 nitrogen atoms of 7,8-diaminopelargonic acid (DAPA, also called 7,8-diammoniononanoate) to form a ureido ring. The sequence is that of ATP-dependent dethiobiotin synthetase BioD from Clostridium botulinum (strain Eklund 17B / Type B).